The chain runs to 730 residues: Regulatory factor X 4 (730 aa).

Residues 30–41 show a composition bias toward polar residues; the sequence is YSSHTSLGNISN. Residues 30–59 form a disordered region; the sequence is YSSHTSLGNISNDETDEEKENRASKPHSTP. A DNA-binding region (RFX-type winged-helix) is located at residues 61–136; the sequence is TLQWLGENYE…YHYYGIAVKE (76 aa). A disordered region spans residues 500-532; it reads EPAISTPSPVPFSPAASSSSVEIPSATSPVSNQ. Residues 512-528 show a composition bias toward low complexity; sequence SPAASSSSVEIPSATSP.

This sequence belongs to the RFX family.

Its subcellular location is the nucleus. Functionally, required for neural tube ciliogenesis during embryogenesis. The chain is Regulatory factor X 4 from Xenopus laevis (African clawed frog).